Consider the following 502-residue polypeptide: MTPTHPTVTELLLPLSEIDDRGVYFEDSFTSWRDHIRHGAAIAAALRERLDPARPPHVGVLLQNTPFFSATLVAGALSGIVPVGLNPVRRGAALAGDIAKADCQLVLTGSGSAEVPADVEHINVDSPEWTDEVAAHRDTEVRFRSADLADLFMLIFTSGTSGDPKAVKCSHRKVAIAGVTITQRFSLGRDDVCYVSMPLFHSNAVLVGWAVAAACQGSMALRRKFSASQFLADVRRYGATYANYVGKPLSYVLATPELPDDADNPLRAVYGNEGVPGDIDRFGRRFGCVVMDGFGSTEGGVAITRTLDTPAGALGPLPGGIQIVDPDTGEPCPTGVVGELVNTAGPGGFEGYYNDEAAEAERMAGGVYHSGDLAYRDDAGYAYFAGRLGDWMRVDGENLGTAPIERVLMRYPDATEVAVYPVPDPVVGDQVMAALVLAPGTKFDADKFRAFLTEQPDLGHKQWPSYVRVSAGLPRTMTFKVIKRQLSAEGVACADPVWPIRR.

It belongs to the ATP-dependent AMP-binding enzyme family.

The catalysed reaction is a medium-chain fatty acid + ATP + CoA = a medium-chain fatty acyl-CoA + AMP + diphosphate. It catalyses the reaction a long-chain fatty acid + ATP + CoA = a long-chain fatty acyl-CoA + AMP + diphosphate. The protein operates within lipid metabolism; fatty acid biosynthesis. Functionally, catalyzes the activation of medium/long-chain fatty acids as acyl-coenzyme A (acyl-CoA), which are then transferred to the multifunctional polyketide synthase (PKS) type III for further chain extension. The sequence is that of Medium/long-chain-fatty-acid--CoA ligase FadD17 (fadD17) from Mycobacterium bovis (strain ATCC BAA-935 / AF2122/97).